A 982-amino-acid polypeptide reads, in one-letter code: MEAKAEGFCSFLVGLSGAPVNSKELKSALEKGDMKARASALEALIRMHLNGEPQNHMIMTVIKFITPLDDHYIKKLVLYFWEVVDKTDASGKLLSEMILICSFLREDLLHPNEYIRGLALRFMCKVKERELVEPLVSSVVQNLTHRVTYVRRNAVLAVHRIFKRFPELLPDAAELVEKFISEENDVSASRNAFEMLVECSPDRVVKFLAELRESKNLESLGATLQMSIVDFAGHMIRANPYDKGRYVTVLFSILQSNNPAVRYQCASTLLSISTSPTAIRQAALTFIDLLKTHTDISVRLIVVDQLDAMRERFSKILQDSLLDILSVLANGTMEIRKRIVTLGVELVSNQNSEVFVQAIKKELYWVKNECDVDDKESLLEYKKLLIRATRTAVARRPHMASAVIPLVLEYLYEEDDSGFEVVSLIREVLQLQPSLRSETLRQLRQTLRMIRCPSVIRTVLWLLGTHVTSADDALEVIRLLINTLEPLPLEPTVKEQMKQQEDFDGHKGGQQKPRMQMTTIVQEDGTYVMSSVPSNKTQEDAEGNDSNCGLRGVLTGGKFFIAAPLASTLSKLIIRLFNHHSSGVDESTMKEAQNSAIMLLNEVLRFCTMDGAAGMIDDATHEQIRLALLNITNPRSPLLATFVEDSSKALDSLTNKVGSIAGGDGFDFNKRNNDNVVGRTSFDEQQVALCSVDTPVMFTQIMEGKGSLLELEAVDDLGSVVANASIEKTEEFLIKLEKTVPLSGFCDPLYCEASVTVHQFDITVDWYIANCTANVLRDVSIELTPLGSMKLCERPQVHTIQPHGSVRIRTALKVGSPETGVICASVLYEGPQNERGCVVLNNVRVDIMNYVRPAKCSASEFRDKWCKYDWENAVAIRTEKTDMREYVEYVMQGTNTRLLEPYPEEDDEVVSAFDGKGDNGHRYVSCNMYARTLFGDDALLNVSIERDAEGKLSGMVRVRANKRPVAYGFGEKLNILNRRIVS.

HEAT repeat units lie at residues 16–53, 130–167, 241–278, and 317–352; these read SGAP…NGEP, ELVE…RFPE, YDKG…SPTA, and LQDS…NQNS.

As to quaternary structure, oligomeric complex that consists of at least the alpha, beta, beta', gamma, delta, epsilon and zeta subunits.

The protein localises to the cytoplasm. It is found in the golgi apparatus membrane. It localises to the cytoplasmic vesicle. Its subcellular location is the COPI-coated vesicle membrane. In terms of biological role, the coatomer is a cytosolic protein complex that binds to dilysine motifs and reversibly associates with Golgi non-clathrin-coated vesicles, which further mediate biosynthetic protein transport from the ER, via the Golgi up to the trans Golgi network. Coatomer complex is required for budding from Golgi membranes, and is essential for the retrograde Golgi-to-ER transport of dilysine-tagged proteins. The sequence is that of Coatomer subunit beta from Trypanosoma brucei brucei.